The following is a 163-amino-acid chain: Keratin-associated protein 11-1 (163 aa).

A run of 4 repeats spans residues Cys-111–Val-120, Cys-121–Val-130, Cys-131–Val-140, and Cys-141–Thr-150. The 4 X 10 AA approximate repeats stretch occupies residues Cys-111–Thr-150.

It belongs to the PMG family. In terms of tissue distribution, expressed in the upper matrix and in the entire hair cortex.

Its function is as follows. In the hair cortex, hair keratin intermediate filaments are embedded in an interfilamentous matrix, consisting of hair keratin-associated proteins (KRTAP), which are essential for the formation of a rigid and resistant hair shaft through their extensive disulfide bond cross-linking with abundant cysteine residues of hair keratins. The matrix proteins include the high-sulfur and high-glycine-tyrosine keratins. In Homo sapiens (Human), this protein is Keratin-associated protein 11-1 (KRTAP11-1).